Consider the following 55-residue polypeptide: Large ribosomal subunit protein bL33 (55 aa).

The protein belongs to the bacterial ribosomal protein bL33 family.

This chain is Large ribosomal subunit protein bL33, found in Klebsiella pneumoniae (strain 342).